The following is a 150-amino-acid chain: Aspartate 1-decarboxylase (150 aa).

The active-site Schiff-base intermediate with substrate; via pyruvic acid is serine 24. Serine 24 carries the pyruvic acid (Ser) modification. Threonine 56 contributes to the substrate binding site. Residue tyrosine 57 is the Proton donor of the active site. Residue 72–74 (GAA) participates in substrate binding.

It belongs to the PanD family. In terms of assembly, heterooctamer of four alpha and four beta subunits. Pyruvate serves as cofactor. In terms of processing, is synthesized initially as an inactive proenzyme, which is activated by self-cleavage at a specific serine bond to produce a beta-subunit with a hydroxyl group at its C-terminus and an alpha-subunit with a pyruvoyl group at its N-terminus.

It localises to the cytoplasm. It catalyses the reaction L-aspartate + H(+) = beta-alanine + CO2. Its pathway is cofactor biosynthesis; (R)-pantothenate biosynthesis; beta-alanine from L-aspartate: step 1/1. Functionally, catalyzes the pyruvoyl-dependent decarboxylation of aspartate to produce beta-alanine. This Xanthobacter autotrophicus (strain ATCC BAA-1158 / Py2) protein is Aspartate 1-decarboxylase.